The chain runs to 136 residues: Ribonuclease P protein component (136 aa).

Positions 39–59 (LPDVSSSKPARDTGAEQTSAP) are disordered.

The protein belongs to the RnpA family. As to quaternary structure, consists of a catalytic RNA component (M1 or rnpB) and a protein subunit.

It catalyses the reaction Endonucleolytic cleavage of RNA, removing 5'-extranucleotides from tRNA precursor.. In terms of biological role, RNaseP catalyzes the removal of the 5'-leader sequence from pre-tRNA to produce the mature 5'-terminus. It can also cleave other RNA substrates such as 4.5S RNA. The protein component plays an auxiliary but essential role in vivo by binding to the 5'-leader sequence and broadening the substrate specificity of the ribozyme. The protein is Ribonuclease P protein component of Salinispora tropica (strain ATCC BAA-916 / DSM 44818 / JCM 13857 / NBRC 105044 / CNB-440).